We begin with the raw amino-acid sequence, 462 residues long: Gamma-aminobutyric acid receptor subunit alpha-5 (462 aa).

The signal sequence occupies residues 1 to 31; it reads MDNGMFSGFIMIKNLLLFCISMNLSSHFGFS. The Extracellular portion of the chain corresponds to 32–260; the sequence is QMPTSSVKDE…FHLKRKIGYF (229 aa). N-linked (GlcNAc...) asparagine glycosylation is present at asparagine 45. Residue arginine 101 coordinates 4-aminobutanoate. An N-linked (GlcNAc...) asparagine glycan is attached at asparagine 145. Residue threonine 164 coordinates 4-aminobutanoate. The cysteines at positions 173 and 187 are disulfide-linked. N-linked (GlcNAc...) asparagine glycosylation is found at asparagine 207 and asparagine 236. The helical transmembrane segment at 261–281 threads the bilayer; sequence VIQTYLPCIMTVILSQVSFWL. Topologically, residues 282-286 are cytoplasmic; it reads NRESV. Residues 287 to 308 form a helical membrane-spanning segment; sequence PARTVFGVTTVLTMTTLSISAR. The Extracellular segment spans residues 309–318; that stretch reads NSLPKVAYAT. The chain crosses the membrane as a helical span at residues 319 to 340; the sequence is AMDWFIAVCYAFVFSALIEFAT. The Cytoplasmic segment spans residues 341-427; that stretch reads VNYFTKRGWA…TYNSISKIDK (87 aa). A Glycyl lysine isopeptide (Lys-Gly) (interchain with G-Cter in ubiquitin) cross-link involves residue lysine 355. Residues 377–412 are disordered; the sequence is FTTGKMSHPPNIPKEQTPAGTSNTTSVSVKPSEEKT. A helical membrane pass occupies residues 428–448; the sequence is MSRIVFPVLFGTFNLVYWATY. Topologically, residues 449-462 are extracellular; sequence LNREPVIKGAASPK.

The protein belongs to the ligand-gated ion channel (TC 1.A.9) family. Gamma-aminobutyric acid receptor (TC 1.A.9.5) subfamily. GABRA5 sub-subfamily. As to quaternary structure, heteropentamer, formed by a combination of alpha (GABRA1-6), beta (GABRB1-3), gamma (GABRG1-3), delta (GABRD), epsilon (GABRE), rho (GABRR1-3), pi (GABRP) and theta (GABRQ) chains, each subunit exhibiting distinct physiological and pharmacological properties.

The protein resides in the postsynaptic cell membrane. The protein localises to the cell membrane. The enzyme catalyses chloride(in) = chloride(out). In terms of biological role, alpha subunit of the heteropentameric ligand-gated chloride channel gated by gamma-aminobutyric acid (GABA), a major inhibitory neurotransmitter in the brain. GABA-gated chloride channels, also named GABA(A) receptors (GABAAR), consist of five subunits arranged around a central pore and contain GABA active binding site(s) located at the alpha and beta subunit interface(s). When activated by GABA, GABAARs selectively allow the flow of chloride anions across the cell membrane down their electrochemical gradient. GABAARs containing alpha-5/GABRA5 subunits are mainly extrasynaptic and contribute to the tonic GABAergic inhibition in the hippocampus. Extrasynaptic alpha-5-containing GABAARs in CA1 pyramidal neurons play a role in learning and memory processes. The chain is Gamma-aminobutyric acid receptor subunit alpha-5 from Homo sapiens (Human).